Reading from the N-terminus, the 405-residue chain is MSSFPAPVLGTPLSPSATRVMLLGSGELGKEVIIALQRLGVEVIAVDRYADAPGHQVAHRAHVVSMTDPAALRAVIEQERPHIIVPEIEAIATDLLVELEQEGVARVTPTARAARLTMNREGIRRLAAETLGLPTSPYQFVDTQDALQQAIDGGIGYPCVIKPVMSSSGKGQSVIRGPGDLDAAWRYAQEGGRVGGGRAIVEGFIDFDYEITLLTVRARGVDGQIETHFCDPIGHKQVDGDYVESWQPHPMSPAALARAREIALGVTGNLGGLGIFGVELFVAGDQVWFSEVSPRPHDTGMVTMITQVQNEFELHARALLGLPVDTALRQPGASSVIYGGLDGRGVTFHGVAQALAEPGTDVRLFGKPEAFVKRRMGVGLAVADTLDAAREKARRVSAAVSVKAA.

N(1)-(5-phospho-beta-D-ribosyl)glycinamide contacts are provided by residues Glu-27–Leu-28 and Glu-87. ATP-binding positions include Arg-120, Lys-162, Ser-167–Gln-172, Glu-202–Ile-205, and Glu-210. The 196-residue stretch at Arg-125–Leu-320 folds into the ATP-grasp domain. Glu-279 and Glu-291 together coordinate Mg(2+). N(1)-(5-phospho-beta-D-ribosyl)glycinamide-binding positions include Asp-298, Lys-367, and Arg-374–Arg-375.

This sequence belongs to the PurK/PurT family. Homodimer.

The enzyme catalyses N(1)-(5-phospho-beta-D-ribosyl)glycinamide + formate + ATP = N(2)-formyl-N(1)-(5-phospho-beta-D-ribosyl)glycinamide + ADP + phosphate + H(+). It functions in the pathway purine metabolism; IMP biosynthesis via de novo pathway; N(2)-formyl-N(1)-(5-phospho-D-ribosyl)glycinamide from N(1)-(5-phospho-D-ribosyl)glycinamide (formate route): step 1/1. Functionally, involved in the de novo purine biosynthesis. Catalyzes the transfer of formate to 5-phospho-ribosyl-glycinamide (GAR), producing 5-phospho-ribosyl-N-formylglycinamide (FGAR). Formate is provided by PurU via hydrolysis of 10-formyl-tetrahydrofolate. The protein is Formate-dependent phosphoribosylglycinamide formyltransferase of Bordetella avium (strain 197N).